Reading from the N-terminus, the 603-residue chain is Elongation factor 4 (603 aa).

Residues 2-184 form the tr-type G domain; the sequence is NHIRNFSIIA…AVIARVPPPK (183 aa). GTP contacts are provided by residues 14–19 and 131–134; these read DHGKST and NKMD.

This sequence belongs to the TRAFAC class translation factor GTPase superfamily. Classic translation factor GTPase family. LepA subfamily.

The protein resides in the cell inner membrane. The enzyme catalyses GTP + H2O = GDP + phosphate + H(+). Its function is as follows. Required for accurate and efficient protein synthesis under certain stress conditions. May act as a fidelity factor of the translation reaction, by catalyzing a one-codon backward translocation of tRNAs on improperly translocated ribosomes. Back-translocation proceeds from a post-translocation (POST) complex to a pre-translocation (PRE) complex, thus giving elongation factor G a second chance to translocate the tRNAs correctly. Binds to ribosomes in a GTP-dependent manner. This is Elongation factor 4 from Polaromonas sp. (strain JS666 / ATCC BAA-500).